A 130-amino-acid polypeptide reads, in one-letter code: UPF0102 protein AHA_3896 (130 aa).

Belongs to the UPF0102 family.

The polypeptide is UPF0102 protein AHA_3896 (Aeromonas hydrophila subsp. hydrophila (strain ATCC 7966 / DSM 30187 / BCRC 13018 / CCUG 14551 / JCM 1027 / KCTC 2358 / NCIMB 9240 / NCTC 8049)).